Here is a 334-residue protein sequence, read N- to C-terminus: Holliday junction branch migration complex subunit RuvB (334 aa).

The tract at residues Ala-4–Tyr-184 is large ATPase domain (RuvB-L). ATP is bound by residues Ile-23, Arg-24, Gly-65, Lys-68, Thr-69, Thr-70, Glu-131–Tyr-133, Arg-174, Tyr-184, and Arg-221. Residue Thr-69 participates in Mg(2+) binding. The tract at residues Gln-185–Asn-255 is small ATPAse domain (RuvB-S). Residues Ala-258–Glu-334 are head domain (RuvB-H). The DNA site is built by Arg-294, Arg-313, and Arg-318.

The protein belongs to the RuvB family. In terms of assembly, homohexamer. Forms an RuvA(8)-RuvB(12)-Holliday junction (HJ) complex. HJ DNA is sandwiched between 2 RuvA tetramers; dsDNA enters through RuvA and exits via RuvB. An RuvB hexamer assembles on each DNA strand where it exits the tetramer. Each RuvB hexamer is contacted by two RuvA subunits (via domain III) on 2 adjacent RuvB subunits; this complex drives branch migration. In the full resolvosome a probable DNA-RuvA(4)-RuvB(12)-RuvC(2) complex forms which resolves the HJ.

Its subcellular location is the cytoplasm. It catalyses the reaction ATP + H2O = ADP + phosphate + H(+). Its function is as follows. The RuvA-RuvB-RuvC complex processes Holliday junction (HJ) DNA during genetic recombination and DNA repair, while the RuvA-RuvB complex plays an important role in the rescue of blocked DNA replication forks via replication fork reversal (RFR). RuvA specifically binds to HJ cruciform DNA, conferring on it an open structure. The RuvB hexamer acts as an ATP-dependent pump, pulling dsDNA into and through the RuvAB complex. RuvB forms 2 homohexamers on either side of HJ DNA bound by 1 or 2 RuvA tetramers; 4 subunits per hexamer contact DNA at a time. Coordinated motions by a converter formed by DNA-disengaged RuvB subunits stimulates ATP hydrolysis and nucleotide exchange. Immobilization of the converter enables RuvB to convert the ATP-contained energy into a lever motion, pulling 2 nucleotides of DNA out of the RuvA tetramer per ATP hydrolyzed, thus driving DNA branch migration. The RuvB motors rotate together with the DNA substrate, which together with the progressing nucleotide cycle form the mechanistic basis for DNA recombination by continuous HJ branch migration. Branch migration allows RuvC to scan DNA until it finds its consensus sequence, where it cleaves and resolves cruciform DNA. This is Holliday junction branch migration complex subunit RuvB from Yersinia pseudotuberculosis serotype O:1b (strain IP 31758).